A 157-amino-acid polypeptide reads, in one-letter code: Large ribosomal subunit protein mL59 (157 aa).

Belongs to the mitochondrion-specific ribosomal protein mL59 family. As to quaternary structure, component of the mitochondrial large ribosomal subunit (mt-LSU). Mature yeast 74S mitochondrial ribosomes consist of a small (37S) and a large (54S) subunit. The 37S small subunit contains a 15S ribosomal RNA (15S mt-rRNA) and 34 different proteins. The 54S large subunit contains a 21S rRNA (21S mt-rRNA) and 46 different proteins.

Its subcellular location is the mitochondrion. In terms of biological role, component of the mitochondrial ribosome (mitoribosome), a dedicated translation machinery responsible for the synthesis of mitochondrial genome-encoded proteins, including at least some of the essential transmembrane subunits of the mitochondrial respiratory chain. The mitoribosomes are attached to the mitochondrial inner membrane and translation products are cotranslationally integrated into the membrane. The protein is Large ribosomal subunit protein mL59 (MRPL25) of Saccharomyces cerevisiae (strain ATCC 204508 / S288c) (Baker's yeast).